Consider the following 384-residue polypeptide: ATP phosphoribosyltransferase regulatory subunit (384 aa).

Belongs to the class-II aminoacyl-tRNA synthetase family. HisZ subfamily. In terms of assembly, heteromultimer composed of HisG and HisZ subunits.

Its subcellular location is the cytoplasm. It participates in amino-acid biosynthesis; L-histidine biosynthesis; L-histidine from 5-phospho-alpha-D-ribose 1-diphosphate: step 1/9. In terms of biological role, required for the first step of histidine biosynthesis. May allow the feedback regulation of ATP phosphoribosyltransferase activity by histidine. The sequence is that of ATP phosphoribosyltransferase regulatory subunit from Azoarcus sp. (strain BH72).